We begin with the raw amino-acid sequence, 629 residues long: tRNA uridine 5-carboxymethylaminomethyl modification enzyme MnmG (629 aa).

Residues 15–20, valine 127, and serine 182 contribute to the FAD site; that span reads GAGHAG. Residues 203–226 are disordered; it reads TPPRVKSSTIDYSKTEEQPGDDHP. Over residues 215 to 226 the composition is skewed to basic and acidic residues; sequence SKTEEQPGDDHP. 274–288 provides a ligand contact to NAD(+); the sequence is GARYCPSIEDKIVRF. Position 371 (glutamine 371) interacts with FAD.

This sequence belongs to the MnmG family. In terms of assembly, homodimer. Heterotetramer of two MnmE and two MnmG subunits. FAD is required as a cofactor.

It is found in the cytoplasm. NAD-binding protein involved in the addition of a carboxymethylaminomethyl (cmnm) group at the wobble position (U34) of certain tRNAs, forming tRNA-cmnm(5)s(2)U34. In Listeria monocytogenes serovar 1/2a (strain ATCC BAA-679 / EGD-e), this protein is tRNA uridine 5-carboxymethylaminomethyl modification enzyme MnmG.